Consider the following 186-residue polypeptide: Ribosome-recycling factor (186 aa).

It belongs to the RRF family.

It is found in the cytoplasm. Functionally, responsible for the release of ribosomes from messenger RNA at the termination of protein biosynthesis. May increase the efficiency of translation by recycling ribosomes from one round of translation to another. This Nitratidesulfovibrio vulgaris (strain DP4) (Desulfovibrio vulgaris) protein is Ribosome-recycling factor.